Consider the following 204-residue polypeptide: Double homeobox protein A (204 aa).

Positions H15 to K74 form a DNA-binding region, homeobox 1. Disordered stretches follow at residues Q73–A101 and E163–W204. Residues L81–D90 show a composition bias toward polar residues. Positions A101–R160 form a DNA-binding region, homeobox 2. Polar residues predominate over residues E184 to H197.

The protein belongs to the paired homeobox family. Expressed in embryonic stem cells.

Its subcellular location is the nucleus. In terms of biological role, transcription factor that acts as a repressor. The sequence is that of Double homeobox protein A from Homo sapiens (Human).